A 234-amino-acid chain; its full sequence is Sugar fermentation stimulation protein homolog (234 aa).

Belongs to the SfsA family.

The polypeptide is Sugar fermentation stimulation protein homolog (Shewanella loihica (strain ATCC BAA-1088 / PV-4)).